Here is a 187-residue protein sequence, read N- to C-terminus: Resolvase OPG149 (187 aa).

The protein belongs to the RuvC family. Poxviruses-type subfamily. The cofactor is Mg(2+).

Plays a role in DNA replication by cleaving viral DNA concatamers to yield unit-length viral genomes. The concatamer junctions contain inverted repeat sequences that can be extruded as cruciforms, yielding Holliday junctions that A22 protein cleaves. This Variola virus (isolate Human/India/Ind3/1967) (VARV) protein is Resolvase OPG149 (OPG149).